Reading from the N-terminus, the 389-residue chain is MADLGFGDARSGNGSRSQCSRGKAMLLALGKGLPEQVLPQEKVVETYLQDTICDDPATRAKLERLCKTTTVRTRYTVMSKELLDEHPELRTEGTPTLTPRLDICNAAVLELGATAARAALGEWGRPAADITHLVYISSSELRLPGGDLFLATRLGLHPNTVRTSLLFLGCSGGAAALRTAKDIAENNPGSRVLVVAAETTVLGFRPPSPDRPYDLVGAALFGDGASAAIIGAGPIAAEESPFLELQFSTQEFLPGTDKVIDGKITEEGINFKLGRDLPEKIENRIEGFCRTLMDRVGIKEFNDVFWAVHPGGPAILNRLEVCLELQPEKLKISRKALMNYGNVSSNTVFYVLEYLRDELKKGMIREEWGLILAFGPGITFEGMLVRGIN.

Cysteine 170 acts as the Nucleophile in catalysis.

It belongs to the thiolase-like superfamily. Chalcone/stilbene synthases family. As to expression, expressed in anthers. Expressed in young and adult flowers.

Plant type III polyketide synthases (PKSs) that catalyzes the condensation of fatty acyl-CoA with malonyl-CoA to generate triketide and tetraketide alpha-pyrones, the main components of pollen exine and potential sporopollenin precursors. This Oryza sativa subsp. japonica (Rice) protein is Type III polyketide synthase 21 (PKS21).